The sequence spans 270 residues: 4-hydroxy-tetrahydrodipicolinate reductase (270 aa).

Residues 11–16 and Glu37 each bind NAD(+); that span reads GAGGRM. Residue Arg38 participates in NADP(+) binding. NAD(+) is bound by residues 101–103 and 125–128; these read GTT and APNM. Catalysis depends on His158, which acts as the Proton donor/acceptor. Residue His159 coordinates (S)-2,3,4,5-tetrahydrodipicolinate. The Proton donor role is filled by Lys162. 168–169 serves as a coordination point for (S)-2,3,4,5-tetrahydrodipicolinate; that stretch reads GT.

Belongs to the DapB family.

The protein resides in the cytoplasm. It catalyses the reaction (S)-2,3,4,5-tetrahydrodipicolinate + NAD(+) + H2O = (2S,4S)-4-hydroxy-2,3,4,5-tetrahydrodipicolinate + NADH + H(+). It carries out the reaction (S)-2,3,4,5-tetrahydrodipicolinate + NADP(+) + H2O = (2S,4S)-4-hydroxy-2,3,4,5-tetrahydrodipicolinate + NADPH + H(+). It functions in the pathway amino-acid biosynthesis; L-lysine biosynthesis via DAP pathway; (S)-tetrahydrodipicolinate from L-aspartate: step 4/4. Its function is as follows. Catalyzes the conversion of 4-hydroxy-tetrahydrodipicolinate (HTPA) to tetrahydrodipicolinate. The protein is 4-hydroxy-tetrahydrodipicolinate reductase of Shewanella sp. (strain W3-18-1).